Here is a 394-residue protein sequence, read N- to C-terminus: Acid ceramidase (394 aa).

Positions 1–18 (MRGQSLLTWVLAAAVTCA) are cleaved as a signal peptide. An intrachain disulfide couples Cys-30 to Cys-339. The active-site Nucleophile is the Cys-142. Residues Asn-172, Asn-194, Asn-258, Asn-341, and Asn-347 are each glycosylated (N-linked (GlcNAc...) asparagine). Residues Cys-387 and Cys-391 are joined by a disulfide bond.

It belongs to the acid ceramidase family. As to quaternary structure, heterodimer; disulfide-linked. The heterodimer is composed of the disulfide-linked alpha and beta chains produced by autocatalytic cleavage of the precursor. In terms of processing, N-glycosylated. Proteolytically cleaved into two chains alpha and beta that remain associated via a disulfide bond. Cleavage gives rise to a conformation change that activates the enzyme. The same catalytic Cys residue mediates the autoproteolytic cleavage and subsequent hydrolysis of lipid substrates. The beta chain may undergo an additional C-terminal processing. In terms of tissue distribution, widely expressed.

The protein resides in the lysosome. It localises to the secreted. It carries out the reaction an N-acylsphing-4-enine + H2O = sphing-4-enine + a fatty acid. The catalysed reaction is N-dodecanoylsphing-4-enine + H2O = dodecanoate + sphing-4-enine. The enzyme catalyses N-(9Z-octadecenoyl)-sphing-4-enine + H2O = sphing-4-enine + (9Z)-octadecenoate. It catalyses the reaction N-tetradecanoylsphing-4-enine + H2O = tetradecanoate + sphing-4-enine. It carries out the reaction N-hexadecanoylsphing-4-enine + H2O = sphing-4-enine + hexadecanoate. The catalysed reaction is N-octadecanoylsphing-4-enine + H2O = sphing-4-enine + octadecanoate. The enzyme catalyses N-dodecanoyl-(4R)-hydroxysphinganine + H2O = (4R)-hydroxysphinganine + dodecanoate. It catalyses the reaction N-(dodecanoyl)-sphinganine + H2O = dodecanoate + sphinganine. It carries out the reaction N-(acetyl)-sphing-4-enine + H2O = sphing-4-enine + acetate. The catalysed reaction is N-(hexanoyl)sphing-4-enine + H2O = hexanoate + sphing-4-enine. The enzyme catalyses N-octanoylsphing-4-enine + H2O = octanoate + sphing-4-enine. It catalyses the reaction N-dodecanoylethanolamine + H2O = dodecanoate + ethanolamine. It participates in lipid metabolism; sphingolipid metabolism. In terms of biological role, lysosomal ceramidase that hydrolyzes sphingolipid ceramides into sphingosine and free fatty acids at acidic pH. Ceramides, sphingosine, and its phosphorylated form sphingosine-1-phosphate are bioactive lipids that mediate cellular signaling pathways regulating several biological processes including cell proliferation, apoptosis and differentiation. Has a higher catalytic efficiency towards C12-ceramides versus other ceramides. Also catalyzes the reverse reaction allowing the synthesis of ceramides from fatty acids and sphingosine. For the reverse synthetic reaction, the natural sphingosine D-erythro isomer is more efficiently utilized as a substrate compared to D-erythro-dihydrosphingosine and D-erythro-phytosphingosine, while the fatty acids with chain lengths of 12 or 14 carbons are the most efficiently used. Also has an N-acylethanolamine hydrolase activity. By regulating the levels of ceramides, sphingosine and sphingosine-1-phosphate in the epidermis, mediates the calcium-induced differentiation of epidermal keratinocytes. Also indirectly regulates tumor necrosis factor/TNF-induced apoptosis. By regulating the intracellular balance between ceramides and sphingosine, in adrenocortical cells, probably also acts as a regulator of steroidogenesis. The sequence is that of Acid ceramidase from Mus musculus (Mouse).